A 306-amino-acid polypeptide reads, in one-letter code: Homeobox protein Hox-C13a (306 aa).

Positions 236–295 (GRKKRVPYTKIQLKELEKEYAASKFITKDKRRRISATTNLSERQVTIWFQNRRVKEKKFV) form a DNA-binding region, homeobox.

Belongs to the Abd-B homeobox family.

Its subcellular location is the nucleus. In terms of biological role, sequence-specific transcription factor which is part of a developmental regulatory system that provides cells with specific positional identities on the anterior-posterior axis. This chain is Homeobox protein Hox-C13a (hoxc13a), found in Danio rerio (Zebrafish).